The primary structure comprises 627 residues: tRNA uridine 5-carboxymethylaminomethyl modification enzyme MnmG (627 aa).

FAD-binding positions include 13-18 (GGGHAG), Val-125, and Ser-180. 274–288 (GPRYCPSIEDKVVRF) contacts NAD(+). Position 371 (Gln-371) interacts with FAD.

This sequence belongs to the MnmG family. In terms of assembly, homodimer. Heterotetramer of two MnmE and two MnmG subunits. FAD serves as cofactor.

It localises to the cytoplasm. Its function is as follows. NAD-binding protein involved in the addition of a carboxymethylaminomethyl (cmnm) group at the wobble position (U34) of certain tRNAs, forming tRNA-cmnm(5)s(2)U34. This is tRNA uridine 5-carboxymethylaminomethyl modification enzyme MnmG from Francisella tularensis subsp. tularensis (strain FSC 198).